Consider the following 189-residue polypeptide: Protein OXIDATIVE STRESS 3 LIKE 2 (189 aa).

2 disordered regions span residues 22 to 49 (SSST…SSYN) and 128 to 147 (AMSQ…LPTL). Residues 33-44 (NSDDDEGGENEI) are compositionally biased toward acidic residues.

Its subcellular location is the nucleus. This is Protein OXIDATIVE STRESS 3 LIKE 2 from Arabidopsis thaliana (Mouse-ear cress).